A 145-amino-acid chain; its full sequence is Secreted LysM effector Vd2LysM (145 aa).

A signal peptide spans 1–18 (MRPDVFVLFTAFLGPAAA). LysM domains follow at residues 31–75 (GWYI…KIKV) and 96–140 (GWYH…DIVV).

This sequence belongs to the secreted LysM effector family. In terms of assembly, forms homodimers in a chitin-independent manner through interactions at the N-termini of EPL2 monomers. Homodimers are further polymerized in a chitin-dependent manner.

In terms of biological role, secreted effector that enables the plant pathogenic fungus to manipulate host defenses for successful infection. Binds chitin, suppresses chitin-induced immune responses and protects hyphae against degradation by plant hydrolytic enzymes. Chitin-induced polymerization of homodimers forms a contiguous ELP2 highly oligomeric super-complexe that may precipitate at infection sites to eliminate chitin oligomers, and thus suppress the activation of chitin-induced plant immunity. This Verticillium dahliae (strain VdLs.17 / ATCC MYA-4575 / FGSC 10137) (Verticillium wilt) protein is Secreted LysM effector Vd2LysM.